We begin with the raw amino-acid sequence, 75 residues long: Putative antitoxin VapB17 (75 aa).

Functionally, putative antitoxin component of a possible type II toxin-antitoxin (TA) system. The cognate toxin is VapC17. This is Putative antitoxin VapB17 (vapB17) from Mycobacterium tuberculosis (strain CDC 1551 / Oshkosh).